The sequence spans 215 residues: Negative modulator of initiation of replication (215 aa).

Residues 71 to 93 (AETPKPSSEQEIRTPARKQSTQS) form a disordered region. The interaction with DNA stretch occupies residues 181–187 (NTNSGRK).

It belongs to the SeqA family. In terms of assembly, homodimer. Polymerizes to form helical filaments.

Its subcellular location is the cytoplasm. Its function is as follows. Negative regulator of replication initiation, which contributes to regulation of DNA replication and ensures that replication initiation occurs exactly once per chromosome per cell cycle. Binds to pairs of hemimethylated GATC sequences in the oriC region, thus preventing assembly of replication proteins and re-initiation at newly replicated origins. Repression is relieved when the region becomes fully methylated. The protein is Negative modulator of initiation of replication of Mannheimia succiniciproducens (strain KCTC 0769BP / MBEL55E).